The primary structure comprises 211 residues: Thiamine-phosphate synthase (211 aa).

Residues 37 to 41 and Asn-69 contribute to the 4-amino-2-methyl-5-(diphosphooxymethyl)pyrimidine site; that span reads QLREK. The Mg(2+) site is built by Asp-70 and Glu-89. Ser-108 is a 4-amino-2-methyl-5-(diphosphooxymethyl)pyrimidine binding site. 134-136 is a binding site for 2-[(2R,5Z)-2-carboxy-4-methylthiazol-5(2H)-ylidene]ethyl phosphate; the sequence is TTT. Lys-137 lines the 4-amino-2-methyl-5-(diphosphooxymethyl)pyrimidine pocket. 2-[(2R,5Z)-2-carboxy-4-methylthiazol-5(2H)-ylidene]ethyl phosphate contacts are provided by residues Gly-163 and 183–184; that span reads VS.

Belongs to the thiamine-phosphate synthase family. It depends on Mg(2+) as a cofactor.

The enzyme catalyses 2-[(2R,5Z)-2-carboxy-4-methylthiazol-5(2H)-ylidene]ethyl phosphate + 4-amino-2-methyl-5-(diphosphooxymethyl)pyrimidine + 2 H(+) = thiamine phosphate + CO2 + diphosphate. It catalyses the reaction 2-(2-carboxy-4-methylthiazol-5-yl)ethyl phosphate + 4-amino-2-methyl-5-(diphosphooxymethyl)pyrimidine + 2 H(+) = thiamine phosphate + CO2 + diphosphate. It carries out the reaction 4-methyl-5-(2-phosphooxyethyl)-thiazole + 4-amino-2-methyl-5-(diphosphooxymethyl)pyrimidine + H(+) = thiamine phosphate + diphosphate. It functions in the pathway cofactor biosynthesis; thiamine diphosphate biosynthesis; thiamine phosphate from 4-amino-2-methyl-5-diphosphomethylpyrimidine and 4-methyl-5-(2-phosphoethyl)-thiazole: step 1/1. Functionally, condenses 4-methyl-5-(beta-hydroxyethyl)thiazole monophosphate (THZ-P) and 2-methyl-4-amino-5-hydroxymethyl pyrimidine pyrophosphate (HMP-PP) to form thiamine monophosphate (TMP). This chain is Thiamine-phosphate synthase, found in Enterococcus faecalis (strain ATCC 700802 / V583).